Here is a 105-residue protein sequence, read N- to C-terminus: Small ribosomal subunit protein eS26 (105 aa).

The protein belongs to the eukaryotic ribosomal protein eS26 family. As to quaternary structure, component of the small ribosomal subunit.

It localises to the cytoplasm. The sequence is that of Small ribosomal subunit protein eS26 (RPS26) from Encephalitozoon cuniculi (strain GB-M1) (Microsporidian parasite).